A 454-amino-acid polypeptide reads, in one-letter code: PC-esterase domain-containing protein 1A (454 aa).

Belongs to the PC-esterase family.

The chain is PC-esterase domain-containing protein 1A (PCED1A) from Homo sapiens (Human).